A 252-amino-acid polypeptide reads, in one-letter code: Flap endonuclease Xni (252 aa).

D105 is a Mg(2+) binding site. The 5'-3' exonuclease domain maps to 162-251 (EQYQFLDFIA…EINLKQFRVK (90 aa)). L172, A173, P181, I183, and I186 together coordinate K(+). Residues 185–190 (GIGPKS) form an interaction with DNA region.

It belongs to the Xni family. Requires Mg(2+) as cofactor. The cofactor is K(+).

Has flap endonuclease activity. During DNA replication, flap endonucleases cleave the 5'-overhanging flap structure that is generated by displacement synthesis when DNA polymerase encounters the 5'-end of a downstream Okazaki fragment. The sequence is that of Flap endonuclease Xni from Shewanella denitrificans (strain OS217 / ATCC BAA-1090 / DSM 15013).